The primary structure comprises 333 residues: Secreted mono- and diacylglycerol lipase 1 (333 aa).

A signal peptide spans 1–16; the sequence is MMLILSILSIIAFAAA. Cystine bridges form between Cys-56–Cys-268 and Cys-276–Cys-298. Ser-176 acts as the Nucleophile in catalysis. Residues Asp-230 and His-288 contribute to the active site.

Belongs to the AB hydrolase superfamily. Lipase family. Class 3 subfamily.

It is found in the secreted. The enzyme catalyses a monoacylglycerol + H2O = glycerol + a fatty acid + H(+). It catalyses the reaction a diacylglycerol + H2O = a monoacylglycerol + a fatty acid + H(+). Functionally, secreted mono- and diacylglycerol lipase that allows the use of hydrolyzed lipids as carbon source and might play a role in pathogenicity. Shows lipolytic activity towards olive oil and p-nitrophenylpalmitate. The protein is Secreted mono- and diacylglycerol lipase 1 of Fusarium solani (Filamentous fungus).